Consider the following 396-residue polypeptide: Elongation factor Tu (396 aa).

The 197-residue stretch at K10–V206 folds into the tr-type G domain. Residues G19–T26 are G1. Position 19–26 (G19–T26) interacts with GTP. T26 serves as a coordination point for Mg(2+). The interval G60–S64 is G2. The tract at residues D81–G84 is G3. GTP is bound by residues D81–H85 and N136–D139. Positions N136–D139 are G4. Residues S174–L176 are G5.

Belongs to the TRAFAC class translation factor GTPase superfamily. Classic translation factor GTPase family. EF-Tu/EF-1A subfamily. Monomer.

The protein localises to the cytoplasm. It catalyses the reaction GTP + H2O = GDP + phosphate + H(+). Its function is as follows. GTP hydrolase that promotes the GTP-dependent binding of aminoacyl-tRNA to the A-site of ribosomes during protein biosynthesis. This Legionella pneumophila (strain Paris) protein is Elongation factor Tu.